The sequence spans 179 residues: MVSFFMEHALTMILIILIINVVYVTLFTVRMIFTLKNQRYLAATVSMIEIIVYVLGLSLVLDNLDRIENLIAYAVGYGIGVITGMKVEEKLALGYITVNVITKEYEPDIPNTLRDKGYGVTNWVAYGREGERLMMEILTSRKSEADLYATIKKLDPKAFIISHEPKTFFGGFWVKGIRR.

Transmembrane regions (helical) follow at residues 9–29 (ALTMILIILIINVVYVTLFTV), 41–61 (LAATVSMIEIIVYVLGLSLVL), and 67–87 (IENLIAYAVGYGIGVITGMKV).

It belongs to the UPF0316 family.

The protein resides in the cell membrane. This chain is UPF0316 protein BH0621, found in Halalkalibacterium halodurans (strain ATCC BAA-125 / DSM 18197 / FERM 7344 / JCM 9153 / C-125) (Bacillus halodurans).